We begin with the raw amino-acid sequence, 347 residues long: Heat-inducible transcription repressor HrcA (347 aa).

Belongs to the HrcA family.

Negative regulator of class I heat shock genes (grpE-dnaK-dnaJ and groELS operons). Prevents heat-shock induction of these operons. The chain is Heat-inducible transcription repressor HrcA from Mycobacterium sp. (strain JLS).